An 84-amino-acid chain; its full sequence is UPF0729 protein F18A11.3 (84 aa).

Residues 1–21 (MVCLPCIFLPIMMAIYMKFIM) form a helical membrane-spanning segment.

The protein belongs to the UPF0729 family.

Its subcellular location is the cell membrane. This is UPF0729 protein F18A11.3 from Caenorhabditis elegans.